Consider the following 144-residue polypeptide: Deoxyuridine 5'-triphosphate nucleotidohydrolase (144 aa).

Residues 63–65 (RSG), Asn-76, 80–82 (TID), and Lys-90 contribute to the substrate site.

The protein belongs to the dUTPase family. The cofactor is Mg(2+).

It carries out the reaction dUTP + H2O = dUMP + diphosphate + H(+). The protein operates within pyrimidine metabolism; dUMP biosynthesis; dUMP from dCTP (dUTP route): step 2/2. Its function is as follows. This enzyme is involved in nucleotide metabolism: it produces dUMP, the immediate precursor of thymidine nucleotides and it decreases the intracellular concentration of dUTP so that uracil cannot be incorporated into DNA. This is Deoxyuridine 5'-triphosphate nucleotidohydrolase from Hydrogenobaculum sp. (strain Y04AAS1).